Reading from the N-terminus, the 122-residue chain is Large ribosomal subunit protein uL14 (122 aa).

Belongs to the universal ribosomal protein uL14 family. As to quaternary structure, part of the 50S ribosomal subunit. Forms a cluster with proteins L3 and L19. In the 70S ribosome, L14 and L19 interact and together make contacts with the 16S rRNA in bridges B5 and B8.

Its function is as follows. Binds to 23S rRNA. Forms part of two intersubunit bridges in the 70S ribosome. This chain is Large ribosomal subunit protein uL14, found in Nitrosospira multiformis (strain ATCC 25196 / NCIMB 11849 / C 71).